Here is a 644-residue protein sequence, read N- to C-terminus: DNA gyrase subunit B (644 aa).

The 115-residue stretch at 429–543 (CEIFLVEGDS…AGYVYIAQPP (115 aa)) folds into the Toprim domain. Positions 435, 508, and 510 each coordinate Mg(2+).

It belongs to the type II topoisomerase GyrB family. In terms of assembly, heterotetramer, composed of two GyrA and two GyrB chains. In the heterotetramer, GyrA contains the active site tyrosine that forms a transient covalent intermediate with DNA, while GyrB binds cofactors and catalyzes ATP hydrolysis. Mg(2+) serves as cofactor. The cofactor is Mn(2+). Ca(2+) is required as a cofactor.

It localises to the cytoplasm. The enzyme catalyses ATP-dependent breakage, passage and rejoining of double-stranded DNA.. In terms of biological role, a type II topoisomerase that negatively supercoils closed circular double-stranded (ds) DNA in an ATP-dependent manner to modulate DNA topology and maintain chromosomes in an underwound state. Negative supercoiling favors strand separation, and DNA replication, transcription, recombination and repair, all of which involve strand separation. Also able to catalyze the interconversion of other topological isomers of dsDNA rings, including catenanes and knotted rings. Type II topoisomerases break and join 2 DNA strands simultaneously in an ATP-dependent manner. This is DNA gyrase subunit B from Staphylococcus aureus (strain USA300).